The sequence spans 576 residues: Peptidoglycan D,D-transpeptidase FtsI (576 aa).

A helical transmembrane segment spans residues 22–42 (ITILLSLIIITIILVLSRITF). Serine 308 acts as the Acyl-ester intermediate in catalysis.

It belongs to the transpeptidase family. FtsI subfamily.

The protein localises to the cell inner membrane. It catalyses the reaction Preferential cleavage: (Ac)2-L-Lys-D-Ala-|-D-Ala. Also transpeptidation of peptidyl-alanyl moieties that are N-acyl substituents of D-alanine.. It functions in the pathway cell wall biogenesis; peptidoglycan biosynthesis. Its function is as follows. Catalyzes cross-linking of the peptidoglycan cell wall at the division septum. The polypeptide is Peptidoglycan D,D-transpeptidase FtsI (Buchnera aphidicola subsp. Baizongia pistaciae (strain Bp)).